A 259-amino-acid chain; its full sequence is DNA adenine methylase (259 aa).

The S-adenosyl-L-methionine site is built by Tyr7, Lys11, Asp50, and Asp171.

The protein belongs to the N(4)/N(6)-methyltransferase family. As to quaternary structure, monomer.

It carries out the reaction a 2'-deoxyadenosine in DNA + S-adenosyl-L-methionine = an N(6)-methyl-2'-deoxyadenosine in DNA + S-adenosyl-L-homocysteine + H(+). An alpha subtpe methyltransferase that recognizes the double-stranded sequence 5'-GATC-3' and methylates A-2 on both strands. May prevent degradation of viral DNA by the host restriction-modification antiviral defense system. This is DNA adenine methylase from Enterobacteria phage T2 (Bacteriophage T2).